Reading from the N-terminus, the 280-residue chain is Proteasome subunit beta 2 (280 aa).

A propeptide spans 1 to 52 (removed in mature form; by autocatalysis); sequence MTERERGQGLPAEFFAVGTASFVELLSRTAPQLLPVNRVRDGSHPMPDIPHG. Thr53 acts as the Nucleophile in catalysis.

Belongs to the peptidase T1B family. As to quaternary structure, the 20S proteasome core is composed of 14 alpha and 14 beta subunits that assemble into four stacked heptameric rings, resulting in a barrel-shaped structure. The two inner rings, each composed of seven catalytic beta subunits, are sandwiched by two outer rings, each composed of seven alpha subunits. The catalytic chamber with the active sites is on the inside of the barrel. Has a gated structure, the ends of the cylinder being occluded by the N-termini of the alpha-subunits. Is capped by the proteasome-associated ATPase, ARC.

It localises to the cytoplasm. It carries out the reaction Cleavage of peptide bonds with very broad specificity.. It functions in the pathway protein degradation; proteasomal Pup-dependent pathway. The formation of the proteasomal ATPase ARC-20S proteasome complex, likely via the docking of the C-termini of ARC into the intersubunit pockets in the alpha-rings, may trigger opening of the gate for substrate entry. Interconversion between the open-gate and close-gate conformations leads to a dynamic regulation of the 20S proteasome proteolysis activity. Functionally, component of the proteasome core, a large protease complex with broad specificity involved in protein degradation. The polypeptide is Proteasome subunit beta 2 (Thermomonospora curvata (strain ATCC 19995 / DSM 43183 / JCM 3096 / KCTC 9072 / NBRC 15933 / NCIMB 10081 / Henssen B9)).